A 133-amino-acid chain; its full sequence is ATP synthase epsilon chain (133 aa).

Belongs to the ATPase epsilon chain family. In terms of assembly, F-type ATPases have 2 components, CF(1) - the catalytic core - and CF(0) - the membrane proton channel. CF(1) has five subunits: alpha(3), beta(3), gamma(1), delta(1), epsilon(1). CF(0) has three main subunits: a, b and c.

The protein localises to the cell membrane. Produces ATP from ADP in the presence of a proton gradient across the membrane. The polypeptide is ATP synthase epsilon chain (Lawsonia intracellularis (strain PHE/MN1-00)).